The following is a 202-amino-acid chain: Small ribosomal subunit protein uS4 (202 aa).

Positions R23 to R42 are disordered. An S4 RNA-binding domain is found at M90–M153.

Belongs to the universal ribosomal protein uS4 family. In terms of assembly, part of the 30S ribosomal subunit. Contacts protein S5. The interaction surface between S4 and S5 is involved in control of translational fidelity.

Its function is as follows. One of the primary rRNA binding proteins, it binds directly to 16S rRNA where it nucleates assembly of the body of the 30S subunit. In terms of biological role, with S5 and S12 plays an important role in translational accuracy. The polypeptide is Small ribosomal subunit protein uS4 (Microcystis aeruginosa (strain NIES-843 / IAM M-2473)).